Here is a 335-residue protein sequence, read N- to C-terminus: Beta-ketoacyl-[acyl-carrier-protein] synthase III (335 aa).

Catalysis depends on residues Cys-117 and His-258. Positions 259–263 are ACP-binding; it reads QANQR. Asn-288 is a catalytic residue.

It belongs to the thiolase-like superfamily. FabH family. As to quaternary structure, homodimer.

It localises to the cytoplasm. It carries out the reaction malonyl-[ACP] + acetyl-CoA + H(+) = 3-oxobutanoyl-[ACP] + CO2 + CoA. It functions in the pathway lipid metabolism; fatty acid biosynthesis. Catalyzes the condensation reaction of fatty acid synthesis by the addition to an acyl acceptor of two carbons from malonyl-ACP. Catalyzes the first condensation reaction which initiates fatty acid synthesis and may therefore play a role in governing the total rate of fatty acid production. Possesses both acetoacetyl-ACP synthase and acetyl transacylase activities. Its substrate specificity determines the biosynthesis of branched-chain and/or straight-chain of fatty acids. This chain is Beta-ketoacyl-[acyl-carrier-protein] synthase III, found in Synechococcus elongatus (strain ATCC 33912 / PCC 7942 / FACHB-805) (Anacystis nidulans R2).